We begin with the raw amino-acid sequence, 179 residues long: Large ribosomal subunit protein uL6 (179 aa).

Belongs to the universal ribosomal protein uL6 family. Part of the 50S ribosomal subunit.

Functionally, this protein binds to the 23S rRNA, and is important in its secondary structure. It is located near the subunit interface in the base of the L7/L12 stalk, and near the tRNA binding site of the peptidyltransferase center. In Synechococcus sp. (strain CC9311), this protein is Large ribosomal subunit protein uL6.